The primary structure comprises 214 residues: N-(5'-phosphoribosyl)anthranilate isomerase (214 aa).

It belongs to the TrpF family.

The catalysed reaction is N-(5-phospho-beta-D-ribosyl)anthranilate = 1-(2-carboxyphenylamino)-1-deoxy-D-ribulose 5-phosphate. The protein operates within amino-acid biosynthesis; L-tryptophan biosynthesis; L-tryptophan from chorismate: step 3/5. This is N-(5'-phosphoribosyl)anthranilate isomerase from Halorubrum lacusprofundi (strain ATCC 49239 / DSM 5036 / JCM 8891 / ACAM 34).